The sequence spans 499 residues: Glycerol kinase (499 aa).

Threonine 12 lines the ADP pocket. 3 residues coordinate ATP: threonine 12, threonine 13, and serine 14. Threonine 12 provides a ligand contact to sn-glycerol 3-phosphate. Arginine 16 provides a ligand contact to ADP. Arginine 82, glutamate 83, and tyrosine 134 together coordinate sn-glycerol 3-phosphate. Glycerol-binding residues include arginine 82, glutamate 83, and tyrosine 134. A Phosphohistidine; by HPr modification is found at histidine 230. A sn-glycerol 3-phosphate-binding site is contributed by aspartate 244. Glycerol is bound by residues aspartate 244 and glutamine 245. The ADP site is built by threonine 266 and glycine 309. ATP is bound by residues threonine 266, glycine 309, glutamine 313, and glycine 410. The ADP site is built by glycine 410 and asparagine 414.

Belongs to the FGGY kinase family. In terms of assembly, homotetramer and homodimer (in equilibrium). In terms of processing, the phosphoenolpyruvate-dependent sugar phosphotransferase system (PTS), including enzyme I, and histidine-containing protein (HPr) are required for the phosphorylation, which leads to the activation of the enzyme.

The enzyme catalyses glycerol + ATP = sn-glycerol 3-phosphate + ADP + H(+). It participates in polyol metabolism; glycerol degradation via glycerol kinase pathway; sn-glycerol 3-phosphate from glycerol: step 1/1. Activated by phosphorylation and inhibited by fructose 1,6-bisphosphate (FBP). Functionally, key enzyme in the regulation of glycerol uptake and metabolism. Catalyzes the phosphorylation of glycerol to yield sn-glycerol 3-phosphate. The polypeptide is Glycerol kinase (Staphylococcus haemolyticus (strain JCSC1435)).